We begin with the raw amino-acid sequence, 133 residues long: MVMDIRVLTPDRVICSTTADEVILPGLTGQVGVLDGHATLITALDTGLLRIKLADKWTPIILCGGLAEIDRNRVTVLVNDVEELVAVELSEATKELEKATSAIENAETSKARLDASVELKKATARLEGINYLS.

The protein belongs to the ATPase epsilon chain family. F-type ATPases have 2 components, CF(1) - the catalytic core - and CF(0) - the membrane proton channel. CF(1) has five subunits: alpha(3), beta(3), gamma(1), delta(1), epsilon(1). CF(0) has three main subunits: a, b and c.

The protein localises to the plastid. Its subcellular location is the chloroplast thylakoid membrane. In terms of biological role, produces ATP from ADP in the presence of a proton gradient across the membrane. This is ATP synthase epsilon chain, chloroplastic from Thalassiosira pseudonana (Marine diatom).